A 338-amino-acid polypeptide reads, in one-letter code: Large ribosomal subunit protein uL3 (338 aa).

Residues 230–258 are disordered; the sequence is HRKGHRRTGTIGPQAPAVMFTQPRPGQMG.

The protein belongs to the universal ribosomal protein uL3 family. In terms of assembly, part of the 50S ribosomal subunit. Forms a cluster with proteins L14 and L24e.

One of the primary rRNA binding proteins, it binds directly near the 3'-end of the 23S rRNA, where it nucleates assembly of the 50S subunit. This is Large ribosomal subunit protein uL3 from Pyrobaculum aerophilum (strain ATCC 51768 / DSM 7523 / JCM 9630 / CIP 104966 / NBRC 100827 / IM2).